The sequence spans 339 residues: Serine/threonine-protein kinase SAPK2 (339 aa).

The Protein kinase domain maps to 4–260 (YEVIKDIGSG…IPEIKNHPWF (257 aa)). ATP-binding positions include 10-18 (IGSGNFGVA) and K33. D123 functions as the Proton acceptor in the catalytic mechanism. The segment at 253-339 (EIKNHPWFLK…EDSGDFVCAL (87 aa)) is C-terminal.

Belongs to the protein kinase superfamily. Ser/Thr protein kinase family. In terms of processing, phosphorylated.

The enzyme catalyses L-seryl-[protein] + ATP = O-phospho-L-seryl-[protein] + ADP + H(+). The catalysed reaction is L-threonyl-[protein] + ATP = O-phospho-L-threonyl-[protein] + ADP + H(+). Its function is as follows. May play a role in signal transduction of hyperosmotic response. Can phosphorylate BZIP46 in vitro. The protein is Serine/threonine-protein kinase SAPK2 (SAPK2) of Oryza sativa subsp. indica (Rice).